The following is a 464-amino-acid chain: Protein phosphatase 2C homolog 2 (464 aa).

One can recognise a PPM-type phosphatase domain in the interval 23-292 (AFGLCAMQGW…DNMSIVVVAL (270 aa)). Residues aspartate 62, glycine 63, aspartate 234, and aspartate 283 each coordinate Mn(2+). The interval 174–355 (DGFVEMDRVN…KPQDKFTRDH (182 aa)) is interaction with IRE1. Disordered regions lie at residues 361-398 (SVTA…TSGP) and 434-464 (QLLQ…SHLQ). Residues 366-384 (DNDDPMDIDDTDADTDAEN) are compositionally biased toward acidic residues. 2 positions are modified to phosphothreonine: threonine 376 and threonine 380. The segment covering 386–396 (DPSSQSKSKTS) has biased composition (polar residues). Positions 448–458 (PENDSNTDHKA) are enriched in basic and acidic residues.

Belongs to the PP2C family. In terms of assembly, interacts with IRE1 (when phosphorylated); the interaction is direct and serves to attenuate the endoplasmic reticulum unfolded protein response. Interacts (when phosphorylated) with RAD53 (via domain FHA 1); the interaction is direct and serves to regulate DNA damage checkpoint signaling. Interacts with the ATG17-ATG29-ATG31 and ATG1-ATG13 supercomplex; to regulate induction of autophagy. Requires Mg(2+) as cofactor. Mn(2+) serves as cofactor.

The protein resides in the nucleus. Its subcellular location is the cytoplasm. The protein localises to the cytosol. The catalysed reaction is O-phospho-L-seryl-[protein] + H2O = L-seryl-[protein] + phosphate. It catalyses the reaction O-phospho-L-threonyl-[protein] + H2O = L-threonyl-[protein] + phosphate. Dephosphorylating regulator for many key proteins. Dephosphorylates the cell cycle master regulator CDC28/cyclin-dependent kinase 1; its activity appears redundant with phosphatase PTC3. Dephosphorylates HOG1 at 'Thr-171', to attenuate activation of the stress-activated p38MAPK cascade; its activity appears redundant with phosphatase PTC3. Positively regulates both nonselective macroautophagy as well as the selective cytoplasm-to-vacuole (cvt) autophagy pathway and the genotoxin-induced targeted autophagy (GTA) pathway, possibly by dephosphorylating ATG13 to enable the interaction between the ATG17-ATG29-ATG31 and ATG1-ATG13 complexes; its activity appears redundant with phosphatase PTC3. Dephosphorylates RAD53, to regulate DNA damage checkpoint signaling. Dephosphorylates IRE1, to negatively regulate the endoplasmic reticulum unfolded protein response. In Saccharomyces cerevisiae (strain ATCC 204508 / S288c) (Baker's yeast), this protein is Protein phosphatase 2C homolog 2 (PTC2).